The following is an 84-amino-acid chain: Putative membrane protein insertion efficiency factor (84 aa).

This sequence belongs to the UPF0161 family.

It localises to the cell inner membrane. In terms of biological role, could be involved in insertion of integral membrane proteins into the membrane. This is Putative membrane protein insertion efficiency factor from Shewanella frigidimarina (strain NCIMB 400).